Here is a 497-residue protein sequence, read N- to C-terminus: Tripartite motif-containing protein 5 (497 aa).

N-acetylalanine is present on alanine 2. The segment at 15 to 60 adopts an RING-type zinc-finger fold; the sequence is CPICLELLTEPLSLHCGHSFCQACITANHKKSMLYKEGERSCPVCR. Residue serine 87 is modified to Phosphoserine. A B box-type zinc finger spans residues 92 to 133; sequence QKVDHCARHGEKLLLFCQEDSKVICWLCERSQEHRGHHTFLM. Zn(2+) is bound by residues cysteine 97, histidine 100, cysteine 119, and histidine 125. Positions 137-225 form a coiled coil; that stretch reads AQEYHVKLQT…LTKSETEMVQ (89 aa). The required for interaction with GABARAP and for autophagy stretch occupies residues 187–200; that stretch reads FEQLREILDWEESN. In terms of domain architecture, B30.2/SPRY spans 283-497; it reads LKGMLDMFRE…VPMTLCSPSS (215 aa).

It belongs to the TRIM/RBCC family. In terms of assembly, can form homodimers and homotrimers. In addition to lower-order dimerization, also exhibits a higher-order multimerization and both low- and high-order multimerizations are essential for its restriction activity. Interacts with MAP3K7/TAK1, TAB2 and TAB3. Interacts with HSPA8/HSC70, PSMC2, PSMC4, PSMC5 and PSMD7. Interacts with SQSTM1. Interacts (via B30.2/SPRY domain) with HSPA1A/B. Interacts with TRIM6 and TRIM34. Interacts with BECN1; GABARAP. Interacts with ULK1 (phosphorylated form), GABARAPL1, GABARAPL2, MAP1LC3A and MAP1LC3C. Degraded in a proteasome-independent fashion in the absence of viral infection but in a proteasome-dependent fashion following exposure to restriction sensitive virus. In terms of processing, autoubiquitinated in a RING finger- and UBE2D2-dependent manner. Monoubiquitinated by TRIM21. Deubiquitinated by Yersinia YopJ. Ubiquitination may not lead to proteasomal degradation.

Its subcellular location is the cytoplasm. The protein localises to the nucleus. It catalyses the reaction S-ubiquitinyl-[E2 ubiquitin-conjugating enzyme]-L-cysteine + [acceptor protein]-L-lysine = [E2 ubiquitin-conjugating enzyme]-L-cysteine + N(6)-ubiquitinyl-[acceptor protein]-L-lysine.. It participates in protein modification; protein ubiquitination. Its function is as follows. Capsid-specific restriction factor that prevents infection from non-host-adapted retroviruses. Blocks viral replication early in the life cycle, after viral entry but before reverse transcription. In addition to acting as a capsid-specific restriction factor, also acts as a pattern recognition receptor that activates innate immune signaling in response to the retroviral capsid lattice. Binding to the viral capsid triggers its E3 ubiquitin ligase activity, and in concert with the heterodimeric ubiquitin conjugating enzyme complex UBE2V1-UBE2N (also known as UBC13-UEV1A complex) generates 'Lys-63'-linked polyubiquitin chains, which in turn are catalysts in the autophosphorylation of the MAP3K7/TAK1 complex (includes TAK1, TAB2, and TAB3). Activation of the MAP3K7/TAK1 complex by autophosphorylation results in the induction and expression of NF-kappa-B and MAPK-responsive inflammatory genes, thereby leading to an innate immune response in the infected cell. Restricts infection by human immunodeficiency virus type 1 (HIV-1) and simian immunodeficiency virus (SIV-agm). Plays a role in regulating autophagy through activation of autophagy regulator BECN1 by causing its dissociation from its inhibitors BCL2 and TAB2. Also plays a role in autophagy by acting as a selective autophagy receptor which recognizes and targets HIV-1 capsid protein p24 for autophagic destruction. This is Tripartite motif-containing protein 5 (TRIM5) from Macaca mulatta (Rhesus macaque).